We begin with the raw amino-acid sequence, 551 residues long: Cytochrome P450 monooxygenase abl5 (551 aa).

An N-linked (GlcNAc...) asparagine glycan is attached at Asn24. Residues 37 to 57 traverse the membrane as a helical segment; it reads VVLNTLTAIVVVWICYRAVIY. 5 N-linked (GlcNAc...) asparagine glycosylation sites follow: Asn174, Asn218, Asn283, Asn307, and Asn441. Cys495 provides a ligand contact to heme.

This sequence belongs to the cytochrome P450 family. It depends on heme as a cofactor.

The protein localises to the membrane. In terms of biological role, cytochrome P450 monooxygenase; part of the gene cluster that mediates the biosynthesis of abscisic acid (ABA), a phytohormone that acts antagonistically toward salicylic acid (SA), jasmonic acid (JA) and ethylene (ETH) signaling, to impede plant defense responses. The first step of the pathway catalyzes the reaction from farnesyl diphosphate to alpha-ionylideneethane performed by the alpha-ionylideneethane synthase abl3 via a three-step reaction mechanism involving 2 neutral intermediates, beta-farnesene and allofarnesene. The cytochrome P450 monooxygenase abl1 might then be involved in the conversion of alpha-ionylideneethane to alpha-ionylideneacetic acid. Alpha-ionylideneacetic acid is further converted to abscisic acid in 2 steps involving the cytochrome P450 monooxygenase abl2 and the short-chain dehydrogenase/reductase abl4, via the intermediates 1'-deoxy-ABA or 1',4'-trans-diol-ABA, depending on the order of action of these 2 enzymes. Abl2 is responsible for the hydroxylation of carbon atom C-1' and abl4 might be involved in the oxidation of the C-4' carbon atom. The cytochrome monooxygenase abl5 seems not essential for the biosynthesis of ABA and its function remains to be identified. The chain is Cytochrome P450 monooxygenase abl5 from Leptosphaeria maculans (strain JN3 / isolate v23.1.3 / race Av1-4-5-6-7-8) (Blackleg fungus).